The primary structure comprises 216 residues: Large ribosomal subunit protein uL3 (216 aa).

Disordered stretches follow at residues 89-108 (QRAS…VGGF) and 139-158 (NTHG…QCQS). Residue Q157 is modified to N5-methylglutamine.

It belongs to the universal ribosomal protein uL3 family. In terms of assembly, part of the 50S ribosomal subunit. Forms a cluster with proteins L14 and L19. In terms of processing, methylated by PrmB.

In terms of biological role, one of the primary rRNA binding proteins, it binds directly near the 3'-end of the 23S rRNA, where it nucleates assembly of the 50S subunit. In Halorhodospira halophila (strain DSM 244 / SL1) (Ectothiorhodospira halophila (strain DSM 244 / SL1)), this protein is Large ribosomal subunit protein uL3.